The following is a 260-amino-acid chain: 5'-nucleotidase SurE (260 aa).

The a divalent metal cation site is built by Asp-13, Asp-14, Ser-44, and Asn-102.

The protein belongs to the SurE nucleotidase family. A divalent metal cation serves as cofactor.

It is found in the cytoplasm. It carries out the reaction a ribonucleoside 5'-phosphate + H2O = a ribonucleoside + phosphate. Its function is as follows. Nucleotidase that shows phosphatase activity on nucleoside 5'-monophosphates. The protein is 5'-nucleotidase SurE of Christiangramia forsetii (strain DSM 17595 / CGMCC 1.15422 / KT0803) (Gramella forsetii).